We begin with the raw amino-acid sequence, 206 residues long: Ribosome maturation factor RimM (206 aa).

The PRC barrel domain maps to 113 to 206 (DDEYYWVDLI…RIDSNWPTEL (94 aa)).

The protein belongs to the RimM family. Binds ribosomal protein uS19.

It is found in the cytoplasm. An accessory protein needed during the final step in the assembly of 30S ribosomal subunit, possibly for assembly of the head region. Essential for efficient processing of 16S rRNA. May be needed both before and after RbfA during the maturation of 16S rRNA. It has affinity for free ribosomal 30S subunits but not for 70S ribosomes. The sequence is that of Ribosome maturation factor RimM from Bordetella petrii (strain ATCC BAA-461 / DSM 12804 / CCUG 43448).